Here is a 417-residue protein sequence, read N- to C-terminus: Gamma-glutamyl phosphate reductase (417 aa).

This sequence belongs to the gamma-glutamyl phosphate reductase family.

The protein localises to the cytoplasm. The enzyme catalyses L-glutamate 5-semialdehyde + phosphate + NADP(+) = L-glutamyl 5-phosphate + NADPH + H(+). It participates in amino-acid biosynthesis; L-proline biosynthesis; L-glutamate 5-semialdehyde from L-glutamate: step 2/2. In terms of biological role, catalyzes the NADPH-dependent reduction of L-glutamate 5-phosphate into L-glutamate 5-semialdehyde and phosphate. The product spontaneously undergoes cyclization to form 1-pyrroline-5-carboxylate. This chain is Gamma-glutamyl phosphate reductase, found in Legionella pneumophila (strain Corby).